The primary structure comprises 104 residues: Large ribosomal subunit protein uL24 (104 aa).

It belongs to the universal ribosomal protein uL24 family. Part of the 50S ribosomal subunit.

One of two assembly initiator proteins, it binds directly to the 5'-end of the 23S rRNA, where it nucleates assembly of the 50S subunit. In terms of biological role, one of the proteins that surrounds the polypeptide exit tunnel on the outside of the subunit. This chain is Large ribosomal subunit protein uL24, found in Salmonella paratyphi A (strain ATCC 9150 / SARB42).